The primary structure comprises 401 residues: 8-amino-7-oxononanoate synthase (401 aa).

Residue R24 coordinates substrate. Pyridoxal 5'-phosphate is bound at residue 111–112 (GF). Residue H137 coordinates substrate. Residues S183, H211, and T240 each coordinate pyridoxal 5'-phosphate. K243 is modified (N6-(pyridoxal phosphate)lysine). T357 is a substrate binding site.

Belongs to the class-II pyridoxal-phosphate-dependent aminotransferase family. BioF subfamily. As to quaternary structure, homodimer. It depends on pyridoxal 5'-phosphate as a cofactor.

It catalyses the reaction 6-carboxyhexanoyl-[ACP] + L-alanine + H(+) = (8S)-8-amino-7-oxononanoate + holo-[ACP] + CO2. Its pathway is cofactor biosynthesis; biotin biosynthesis. Catalyzes the decarboxylative condensation of pimeloyl-[acyl-carrier protein] and L-alanine to produce 8-amino-7-oxononanoate (AON), [acyl-carrier protein], and carbon dioxide. The chain is 8-amino-7-oxononanoate synthase from Xanthomonas euvesicatoria pv. vesicatoria (strain 85-10) (Xanthomonas campestris pv. vesicatoria).